A 749-amino-acid polypeptide reads, in one-letter code: MLSYFIPTAKGLAPLLEVELKEMGIENPQQMNGGVKFEGTLEQGYKVCLWSRFASRVLLKLSEFKVLDSMDLYLGCSNIPWETHFDVDKTFSIDFSGTNDEIRNTQFGALKIKDAIVDRFRKHFDERPNVQKRDADIRFNGRLWKDKATIYLDLSGSPLHLRGYRTIAGEAPLRETLAAGIIKRSGWQGEALLDPMCGSGTLVIEAAMMALNIAPGSLRETFGFEKWKKHDQECWQTLKTSAQVYGRRAVNQCETRFYGSDLSKDMIEIARKNAQRAGVGEVIEFSVTDAKKVLPPEELETGMLITNPPYGERLGSFSDTITLYTELGYHFKDAFAGWNLSMFAMDTELLSCLGMRAGKSFKFFNGPIECVLKNYRISPKRPAVEVEPVAPKKTNKETPEPINPWTMGQNESVVEAAIENESELVFKEVQQIKPAIYAEEFANRLLKNLKQLEKWAKREGVECYRLYDADLPEYNVAIDRYAEYIIIQEYRAPKEIETQKVRRRFLDVVSTVRYVLNLPDDKLVIKVRERQKGRQQYEKLDTKKQSLVVHEGQAKMLVNLQDYLDTGLFLDHRPTRLLIGNMAKGKDFLNLFCYTATASVHAALGGAKSTTSVDMSKTYLAWGEDNFAENGIKGKHEFIQQDCIKWLQHAHEMYDLIFIDPPTFSNSKRMNDVFDVQEDHVALLTSASQRLNKQGEIIFSNNKRGFKLDVDAIKALGFYIKDISQSSIPEDFRRNKKIHQCWILTKHTD.

The 112-residue stretch at 43–154 folds into the THUMP domain; that stretch reads QGYKVCLWSR…KDKATIYLDL (112 aa). The interval 386–406 is disordered; that stretch reads VEPVAPKKTNKETPEPINPWT.

It belongs to the methyltransferase superfamily. RlmKL family.

It localises to the cytoplasm. It catalyses the reaction guanosine(2445) in 23S rRNA + S-adenosyl-L-methionine = N(2)-methylguanosine(2445) in 23S rRNA + S-adenosyl-L-homocysteine + H(+). It carries out the reaction guanosine(2069) in 23S rRNA + S-adenosyl-L-methionine = N(2)-methylguanosine(2069) in 23S rRNA + S-adenosyl-L-homocysteine + H(+). Functionally, specifically methylates the guanine in position 2445 (m2G2445) and the guanine in position 2069 (m7G2069) of 23S rRNA. This Psychromonas ingrahamii (strain DSM 17664 / CCUG 51855 / 37) protein is Ribosomal RNA large subunit methyltransferase K/L.